A 459-amino-acid chain; its full sequence is Replication initiator protein (459 aa).

Essential for pSAM2 replication. The polypeptide is Replication initiator protein (repSA) (Streptomyces ambofaciens).